The following is a 447-amino-acid chain: UDP-glycosyltransferase 79B9 (447 aa).

Residues serine 260, 319-321 (VQQ), 336-344 (HCGFGSMWE), and 358-361 (LCDQ) contribute to the UDP-alpha-D-glucose site.

This sequence belongs to the UDP-glycosyltransferase family.

The polypeptide is UDP-glycosyltransferase 79B9 (UGT79B9) (Arabidopsis thaliana (Mouse-ear cress)).